A 177-amino-acid chain; its full sequence is Adenine phosphoribosyltransferase (177 aa).

This sequence belongs to the purine/pyrimidine phosphoribosyltransferase family. As to quaternary structure, homodimer.

The protein localises to the cytoplasm. The enzyme catalyses AMP + diphosphate = 5-phospho-alpha-D-ribose 1-diphosphate + adenine. The protein operates within purine metabolism; AMP biosynthesis via salvage pathway; AMP from adenine: step 1/1. Catalyzes a salvage reaction resulting in the formation of AMP, that is energically less costly than de novo synthesis. In Leptospira biflexa serovar Patoc (strain Patoc 1 / Ames), this protein is Adenine phosphoribosyltransferase.